Here is a 339-residue protein sequence, read N- to C-terminus: DNA-directed RNA polymerase subunit alpha (339 aa).

The segment at 1-235 (MVIQRNWQSL…DQLQLFINFE (235 aa)) is alpha N-terminal domain (alpha-NTD). The tract at residues 251 to 339 (FNRNLLRKVD…DLAKRLEEPF (89 aa)) is alpha C-terminal domain (alpha-CTD).

It belongs to the RNA polymerase alpha chain family. In terms of assembly, homodimer. The RNAP catalytic core consists of 2 alpha, 1 beta, 1 beta' and 1 omega subunit. When a sigma factor is associated with the core the holoenzyme is formed, which can initiate transcription.

It carries out the reaction RNA(n) + a ribonucleoside 5'-triphosphate = RNA(n+1) + diphosphate. In terms of biological role, DNA-dependent RNA polymerase catalyzes the transcription of DNA into RNA using the four ribonucleoside triphosphates as substrates. This chain is DNA-directed RNA polymerase subunit alpha, found in Granulibacter bethesdensis (strain ATCC BAA-1260 / CGDNIH1).